Here is a 268-residue protein sequence, read N- to C-terminus: Hemin import ATP-binding protein HmuV (268 aa).

The ABC transporter domain occupies 5-242; sequence IEARHLSKRA…ETIRDIFEID (238 aa). 37–44 serves as a coordination point for ATP; sequence GPNGAGKS.

This sequence belongs to the ABC transporter superfamily. Heme (hemin) importer (TC 3.A.1.14.5) family. The complex is composed of two ATP-binding proteins (HmuV), two transmembrane proteins (HmuU) and a solute-binding protein (HmuT).

It is found in the cell inner membrane. Part of the ABC transporter complex HmuTUV involved in hemin import. Responsible for energy coupling to the transport system. The chain is Hemin import ATP-binding protein HmuV from Bradyrhizobium diazoefficiens (strain JCM 10833 / BCRC 13528 / IAM 13628 / NBRC 14792 / USDA 110).